Reading from the N-terminus, the 168-residue chain is Putative ankyrin repeat protein RBE_1411 (168 aa).

3 ANK repeats span residues 59–88 (TIFSELSIAIDKGNLEPLKNFLKNNKLQHK), 98–127 (YGDTPLCYAAEKNNFEVAKILIKYGADLTI), and 131–160 (KGETPIELFSQYGNREAVNYLQHCLDILGN).

The polypeptide is Putative ankyrin repeat protein RBE_1411 (Rickettsia bellii (strain RML369-C)).